A 332-amino-acid chain; its full sequence is Tetraacyldisaccharide 4'-kinase (332 aa).

60-67 (TVGGTGKT) contributes to the ATP binding site.

Belongs to the LpxK family.

The enzyme catalyses a lipid A disaccharide + ATP = a lipid IVA + ADP + H(+). The protein operates within glycolipid biosynthesis; lipid IV(A) biosynthesis; lipid IV(A) from (3R)-3-hydroxytetradecanoyl-[acyl-carrier-protein] and UDP-N-acetyl-alpha-D-glucosamine: step 6/6. Transfers the gamma-phosphate of ATP to the 4'-position of a tetraacyldisaccharide 1-phosphate intermediate (termed DS-1-P) to form tetraacyldisaccharide 1,4'-bis-phosphate (lipid IVA). The protein is Tetraacyldisaccharide 4'-kinase of Pseudomonas paraeruginosa (strain DSM 24068 / PA7) (Pseudomonas aeruginosa (strain PA7)).